The chain runs to 269 residues: Adenylate kinase (269 aa).

61–66 (GAGKGT) is an ATP binding site. Residues 81-110 (ATGDMLREQVARQTELGKAAKQIMDQGGLV) are NMP. AMP contacts are provided by residues T82, R87, 108–110 (GLV), 137–140 (GFPR), and Q144. The tract at residues 178 to 215 (GRLVHPASGRSYHKEFNPPKKPMTDDITGEPLIQRSDD) is LID. Residues R179 and 188-189 (SY) contribute to the ATP site. AMP contacts are provided by R212 and R223. Q251 is an ATP binding site.

The protein belongs to the adenylate kinase family. AK2 subfamily. In terms of assembly, monomer.

Its subcellular location is the cytoplasm. It is found in the cytosol. It localises to the mitochondrion intermembrane space. The enzyme catalyses AMP + ATP = 2 ADP. In terms of biological role, catalyzes the reversible transfer of the terminal phosphate group between ATP and AMP. Plays an important role in cellular energy homeostasis and in adenine nucleotide metabolism. Adenylate kinase activity is critical for regulation of the phosphate utilization and the AMP de novo biosynthesis pathways. In Cryptococcus neoformans var. neoformans serotype D (strain B-3501A) (Filobasidiella neoformans), this protein is Adenylate kinase.